The sequence spans 169 residues: MAIREILVVPHPALKQVSQPVEKVDDELRALMDDMLETMYAAPGIGLAAIQIGVPKRVIVMDLAREGEEKQPRYFVNPEILWASDDTAPYEEGCLSVPEYYDEVERPARVKLRYLNYQGEQVEEDAEGLFAVCIQHEMDHLEGVLFIDHLSRLKREQAIKKVKKHAKAA.

Residues cysteine 94 and histidine 136 each coordinate Fe cation. Residue glutamate 137 is part of the active site. Histidine 140 lines the Fe cation pocket.

This sequence belongs to the polypeptide deformylase family. Fe(2+) is required as a cofactor.

It catalyses the reaction N-terminal N-formyl-L-methionyl-[peptide] + H2O = N-terminal L-methionyl-[peptide] + formate. In terms of biological role, removes the formyl group from the N-terminal Met of newly synthesized proteins. Requires at least a dipeptide for an efficient rate of reaction. N-terminal L-methionine is a prerequisite for activity but the enzyme has broad specificity at other positions. This Phenylobacterium zucineum (strain HLK1) protein is Peptide deformylase.